Here is a 423-residue protein sequence, read N- to C-terminus: Methanol:N,N-dimethyl-4-nitrosoaniline oxidoreductase (423 aa).

The protein belongs to the iron-containing alcohol dehydrogenase family. In terms of assembly, homodecamer. Mg(2+) is required as a cofactor. The cofactor is Zn(2+). It depends on NADPH as a cofactor.

The enzyme catalyses methanol + A = formaldehyde + AH2. Its function is as follows. Catalyzes the oxidation of methanol to yield formaldehyde. While the in vivo electron acceptor is not known, N,N-dimethyl-4-nitrosoaniline (NDMA) can serve this function in vitro and is reduced to 4-(hydroxylamino)-N,N-dimethylaniline. The polypeptide is Methanol:N,N-dimethyl-4-nitrosoaniline oxidoreductase (thcE) (Rhodococcus erythropolis (Arthrobacter picolinophilus)).